The chain runs to 407 residues: Peptidase T (407 aa).

Residue histidine 82 participates in Zn(2+) binding. Residue aspartate 84 is part of the active site. Aspartate 143 lines the Zn(2+) pocket. Glutamate 177 acts as the Proton acceptor in catalysis. Residues glutamate 178, aspartate 200, and histidine 382 each coordinate Zn(2+).

Belongs to the peptidase M20B family. It depends on Zn(2+) as a cofactor.

It is found in the cytoplasm. It carries out the reaction Release of the N-terminal residue from a tripeptide.. Cleaves the N-terminal amino acid of tripeptides. The protein is Peptidase T of Streptococcus pyogenes serotype M4 (strain MGAS10750).